The sequence spans 326 residues: MGSLGKVNNEIPTKSSGGSKVLVIGGTGYLGKRLVKASLDSGHDTYVMHRPEIGVDIEKVQLLLSFKMQGAHLVSASFDDQRSLVDAVKLVDVVICAISGVHIRSHQILLQLKLVEAIKEAGNVKRFVPSEFGTDPARMENAMEPGRITFDDKMVVRRAIEEAGIPFTYVSANCFAGYFLGGLCQPGYILPSRDHVTLLGDGDKKGVYVDEDDTAAYTLRAIDDPRTLNKTIYVKPPKNVLSQREVVGIWEKYIGKELQKTILSEQDFLATMREQNYAEQVGLTHYYHVCYEGCLSNFEVDDEQEASKLYPDVHYTTVEEYLKRYV.

NADP(+) contacts are provided by residues 25–31 (GGTGYLG), arginine 50, and lysine 59. Residue lysine 153 is the Proton acceptor of the active site. Residue arginine 157 participates in NADP(+) binding. Histidine 285 contacts substrate.

Belongs to the NmrA-type oxidoreductase family. Isoflavone reductase subfamily. In terms of assembly, dimer.

It catalyses the reaction (+)-lariciresinol + NADP(+) = (+)-pinoresinol + NADPH + H(+). The enzyme catalyses (-)-secoisolariciresinol + NADP(+) = (+)-lariciresinol + NADPH + H(+). Functionally, reductase involved in lignan biosynthesis. Catalyzes the enantioselective conversion of (+)-pinoresinol into (+)-lariciresinol and of (+)-lariciresinol into (-)-secoisolariciresinol. Abstracts the 4R-hydride from the NADPH cofactor during catalysis. This chain is Bifunctional pinoresinol-lariciresinol reductase (PLR1), found in Linum album (Flax).